A 1024-amino-acid polypeptide reads, in one-letter code: Error-prone DNA polymerase (1024 aa).

This sequence belongs to the DNA polymerase type-C family. DnaE2 subfamily.

It localises to the cytoplasm. The catalysed reaction is DNA(n) + a 2'-deoxyribonucleoside 5'-triphosphate = DNA(n+1) + diphosphate. Functionally, DNA polymerase involved in damage-induced mutagenesis and translesion synthesis (TLS). It is not the major replicative DNA polymerase. The protein is Error-prone DNA polymerase of Vibrio vulnificus (strain CMCP6).